The sequence spans 391 residues: MFLKAVVLTVALVAITGTQAEVTSDQVANVMWDYFTQLSNNAKEAVEQLQKTDVTQQLNTLFQDKLGNINTYADDLQNKLVPFAVQLSGHLTKETERVREEIQKELEDLRANMMPHANKVSQMFGDNVQKLQEHLRPYATDLQAQINAQTQDMKRQLTPYIQRMQTTIQDNVENLQSSMVPFANELKEKFNQNMEGLKGQLTPRANELKATIDQNLEDLRSRLAPLAEGVQEKLNHQMEGLAFQMKKNAEELQTKVSTNIDQLQKNLAPLVEDVQSKLKGNTEGLQKSLEDLNKQLDQQVEVFRRAVEPLGDKFNMALVQQMEKFRQQLGSDSGDVESHLSFLEKNLREKVSSFMSTLQKKGSPDQPLALPLPEQVQEQVQEQVQPKPLES.

The signal sequence occupies residues 1 to 20 (MFLKAVVLTVALVAITGTQA). A run of 13 repeats spans residues 33 to 54 (DYFT…KTDV), 60 to 81 (TLFQ…NKLV), 82 to 103 (PFAV…EEIQ), 115 to 136 (PHAN…EHLR), 137 to 158 (PYAT…RQLT), 159 to 180 (PYIQ…SSMV), 181 to 202 (PFAN…GQLT), 203 to 224 (PRAN…SRLA), 225 to 246 (PLAE…FQMK), 247 to 268 (KNAE…KNLA), 269 to 286 (PLVE…EGLQ), 287 to 308 (KSLE…RAVE), and 309 to 330 (PLGD…QQLG). The segment at 33 to 330 (DYFTQLSNNA…QMEKFRQQLG (298 aa)) is 13 X 22 AA approximate tandem repeats. Position 333 is a phosphoserine (serine 333). A disordered region spans residues 354–391 (FMSTLQKKGSPDQPLALPLPEQVQEQVQEQVQPKPLES). Low complexity predominate over residues 371–391 (PLPEQVQEQVQEQVQPKPLES).

The protein belongs to the apolipoprotein A1/A4/E family. As to quaternary structure, homodimer. In terms of tissue distribution, secreted in plasma.

It is found in the secreted. In terms of biological role, may have a role in chylomicrons and VLDL secretion and catabolism. Required for efficient activation of lipoprotein lipase by ApoC-II; potent activator of LCAT. Apoa-IV is a major component of HDL and chylomicrons. The chain is Apolipoprotein A-IV (Apoa4) from Rattus norvegicus (Rat).